The primary structure comprises 336 residues: Ribose-phosphate pyrophosphokinase 1 (336 aa).

Mg(2+) is bound by residues D150, H152, D161, and D165. The segment at 236–251 is binding of phosphoribosylpyrophosphate; the sequence is GKVAVMVDDMIDTAGT.

This sequence belongs to the ribose-phosphate pyrophosphokinase family.

The enzyme catalyses D-ribose 5-phosphate + ATP = 5-phospho-alpha-D-ribose 1-diphosphate + AMP + H(+). This is Ribose-phosphate pyrophosphokinase 1 (PRS1) from Spinacia oleracea (Spinach).